The following is a 73-amino-acid chain: Protein RALF-like 10 (73 aa).

A signal peptide spans 1-17 (MKALVICLLVIFAAVIA). 2 disulfide bridges follow: Cys-35–Cys-44 and Cys-64–Cys-70.

It belongs to the plant rapid alkalinization factor (RALF) family. As to expression, expressed in flowers.

Its subcellular location is the secreted. Its function is as follows. Cell signaling peptide that may regulate plant stress, growth, and development. Mediates a rapid alkalinization of extracellular space by mediating a transient increase in the cytoplasmic Ca(2+) concentration leading to a calcium-dependent signaling events through a cell surface receptor and a concomitant activation of some intracellular mitogen-activated protein kinases. The chain is Protein RALF-like 10 (RALFL10) from Arabidopsis thaliana (Mouse-ear cress).